We begin with the raw amino-acid sequence, 269 residues long: Ribosomal RNA small subunit methyltransferase A (269 aa).

S-adenosyl-L-methionine is bound by residues asparagine 18, leucine 20, glycine 45, glutamate 66, aspartate 91, and asparagine 112.

This sequence belongs to the class I-like SAM-binding methyltransferase superfamily. rRNA adenine N(6)-methyltransferase family. RsmA subfamily.

It localises to the cytoplasm. It carries out the reaction adenosine(1518)/adenosine(1519) in 16S rRNA + 4 S-adenosyl-L-methionine = N(6)-dimethyladenosine(1518)/N(6)-dimethyladenosine(1519) in 16S rRNA + 4 S-adenosyl-L-homocysteine + 4 H(+). Specifically dimethylates two adjacent adenosines (A1518 and A1519) in the loop of a conserved hairpin near the 3'-end of 16S rRNA in the 30S particle. May play a critical role in biogenesis of 30S subunits. This chain is Ribosomal RNA small subunit methyltransferase A, found in Vibrio parahaemolyticus serotype O3:K6 (strain RIMD 2210633).